The sequence spans 118 residues: Group 1 truncated hemoglobin GlbN (118 aa).

His70 is a heme binding site.

This sequence belongs to the truncated hemoglobin family. Group I subfamily. In terms of assembly, monomer. The cofactor is heme.

It localises to the membrane. The chain is Group 1 truncated hemoglobin GlbN (glbN) from Nostoc sp. (strain MUN 8820).